Reading from the N-terminus, the 246-residue chain is MKPSDVRSKAFAMPLTSPAFPMGPYRFVDREFLIITYRTDPDRLREIVPEPLQVTEPLVHYEFIRMADSTGFGDYTESGQVIPVEYNGQPGGYTLAMYLDDHPPIAGGRELWGFPKKLASPTLHVNTDHILGTLDYGKVRVATGTMGYKHKELDIDEQTKRLAGPNFLLKIIPHVDGTARVCELVRYYMQDIKMKGAWTGPASLELAPHALAPVADLPVLEIVEARHLVADLTLGLGEVVYDYLAQ.

The Schiff-base intermediate with acetoacetate role is filled by lysine 116.

Belongs to the ADC family.

The catalysed reaction is acetoacetate + H(+) = acetone + CO2. Catalyzes the conversion of acetoacetate to acetone and carbon dioxide. The sequence is that of Acetoacetate decarboxylase from Burkholderia lata (strain ATCC 17760 / DSM 23089 / LMG 22485 / NCIMB 9086 / R18194 / 383).